Reading from the N-terminus, the 188-residue chain is Heparin-binding hemagglutinin homolog (188 aa).

Residues 162-188 are disordered; the sequence is KAAAPARKAPAKKAPAKKAPAKKVTQK. Basic residues predominate over residues 170–188; sequence APAKKAPAKKAPAKKVTQK.

The protein to M.tuberculosis HbhA.

Functionally, might mediate adherence to host cells by binding sulfated glycoconjugates. The sequence is that of Heparin-binding hemagglutinin homolog (hbhA) from Mycobacterium leprae (strain TN).